Reading from the N-terminus, the 695-residue chain is tRNA wybutosine-synthesizing protein 4 (695 aa).

S-adenosyl-L-methionine contacts are provided by residues Lys-38, Arg-88, Gly-115, 146–147, 196–197, and Glu-224; these read DY and DL. Arg-88 acts as the Proton donor; for both methylation and methoxycarbonylation activities in catalysis. The active-site Proton acceptor; for methoxycarbonylation activity is the Tyr-229.

Belongs to the methyltransferase superfamily. LCMT family.

It is found in the cytoplasm. The protein resides in the mitochondrion. It catalyses the reaction 7-[(3S)-3-amino-3-carboxypropyl]wyosine(37) in tRNA(Phe) + S-adenosyl-L-methionine = 7-[(3S)-(3-amino-3-methoxycarbonyl)propyl]wyosine(37) in tRNA(Phe) + S-adenosyl-L-homocysteine. It carries out the reaction 7-[(3S)-(3-amino-3-methoxycarbonyl)propyl]wyosine(37) in tRNA(Phe) + S-adenosyl-L-methionine + CO2 = wybutosine(37) in tRNA(Phe) + S-adenosyl-L-homocysteine + 2 H(+). The protein operates within tRNA modification; wybutosine-tRNA(Phe) biosynthesis. Functionally, S-adenosyl-L-methionine-dependent methyltransferase that acts as a component of the wybutosine biosynthesis pathway. Wybutosine is a hyper modified guanosine with a tricyclic base found at the 3'-position adjacent to the anticodon of eukaryotic phenylalanine tRNA. Catalyzes the final 2 independent reactions, methylation of the alpha-carboxy group of wybutosine-72 to form wybutosine-58, and methoxycarbonylation of alpha-amino group of wybutosine-58 through the fixation of CO(2) to complete wybutosine. The protein is tRNA wybutosine-synthesizing protein 4 (PPM2) of Saccharomyces cerevisiae (strain ATCC 204508 / S288c) (Baker's yeast).